Here is a 268-residue protein sequence, read N- to C-terminus: Phosphatidylglycerol--prolipoprotein diacylglyceryl transferase (268 aa).

Transmembrane regions (helical) follow at residues 16–36, 56–76, and 92–112; these read FITLRWYGLLIAVAVFIGIWL, IWLVVAAIPAARLYYVAFNWG, and GIAIHGAILGGIVAMAIFTYV. Residue Arg136 participates in a 1,2-diacyl-sn-glycero-3-phospho-(1'-sn-glycerol) binding. 3 helical membrane-spanning segments follow: residues 175-195, 204-224, and 236-256; these read PTFLYESLWNVGVFLLLLWLF, GTLLMVYAIAYSLGRFWIEGL, and IAQVVSLVAIALGSWGLFRLY.

It belongs to the Lgt family.

Its subcellular location is the cell inner membrane. It catalyses the reaction L-cysteinyl-[prolipoprotein] + a 1,2-diacyl-sn-glycero-3-phospho-(1'-sn-glycerol) = an S-1,2-diacyl-sn-glyceryl-L-cysteinyl-[prolipoprotein] + sn-glycerol 1-phosphate + H(+). The protein operates within protein modification; lipoprotein biosynthesis (diacylglyceryl transfer). In terms of biological role, catalyzes the transfer of the diacylglyceryl group from phosphatidylglycerol to the sulfhydryl group of the N-terminal cysteine of a prolipoprotein, the first step in the formation of mature lipoproteins. The polypeptide is Phosphatidylglycerol--prolipoprotein diacylglyceryl transferase (Thermosynechococcus vestitus (strain NIES-2133 / IAM M-273 / BP-1)).